A 274-amino-acid chain; its full sequence is 2,3,4,5-tetrahydropyridine-2,6-dicarboxylate N-succinyltransferase (274 aa).

Substrate contacts are provided by R104 and D141.

The protein belongs to the transferase hexapeptide repeat family. In terms of assembly, homotrimer.

It is found in the cytoplasm. It catalyses the reaction (S)-2,3,4,5-tetrahydrodipicolinate + succinyl-CoA + H2O = (S)-2-succinylamino-6-oxoheptanedioate + CoA. It functions in the pathway amino-acid biosynthesis; L-lysine biosynthesis via DAP pathway; LL-2,6-diaminopimelate from (S)-tetrahydrodipicolinate (succinylase route): step 1/3. In Idiomarina loihiensis (strain ATCC BAA-735 / DSM 15497 / L2-TR), this protein is 2,3,4,5-tetrahydropyridine-2,6-dicarboxylate N-succinyltransferase.